The following is a 211-amino-acid chain: Large ribosomal subunit protein uL4 (211 aa).

Residues glutamine 41–threonine 53 show a composition bias toward polar residues. The disordered stretch occupies residues glutamine 41 to glycine 85. The span at glycine 60–glycine 71 shows a compositional bias: basic residues.

Belongs to the universal ribosomal protein uL4 family. In terms of assembly, part of the 50S ribosomal subunit.

Its function is as follows. One of the primary rRNA binding proteins, this protein initially binds near the 5'-end of the 23S rRNA. It is important during the early stages of 50S assembly. It makes multiple contacts with different domains of the 23S rRNA in the assembled 50S subunit and ribosome. Forms part of the polypeptide exit tunnel. The protein is Large ribosomal subunit protein uL4 of Prochlorococcus marinus (strain SARG / CCMP1375 / SS120).